The sequence spans 463 residues: RuvB-like 2 (463 aa).

Alanine 2 carries the post-translational modification N-acetylalanine. Residue lysine 9 forms a Glycyl lysine isopeptide (Lys-Gly) (interchain with G-Cter in SUMO2) linkage. An ATP-binding site is contributed by 77–84 (GQPGTGKT). Serine 437 carries the post-translational modification Phosphoserine. Glycyl lysine isopeptide (Lys-Gly) (interchain with G-Cter in SUMO2) cross-links involve residues lysine 444 and lysine 456.

This sequence belongs to the RuvB family. As to quaternary structure, forms homohexameric rings. Can form a dodecamer with RUVBL1 made of two stacked hexameric rings; however, even though RUVBL1 and RUVBL2 are present in equimolar ratio, the oligomeric status of each hexamer is not known. Oligomerization may regulate binding to nucleic acids and conversely, binding to nucleic acids may affect the dodecameric assembly. Interaction of the complex with DHX34 results in conformational changes of the N-terminus of the RUVBL2 subunits, resulting in loss of nucleotide binding ability and ATP hydrolysis of the complex. Interacts with the transcriptional activation domain of MYC. Interacts with ATF2. Component of the RNA polymerase II holoenzyme complex. May also act to bridge the LEF1/TCF1-CTNNB1 complex and TBP. Component of the NuA4 histone acetyltransferase complex which contains the catalytic subunit KAT5/TIP60 and the subunits EP400, TRRAP/PAF400, BRD8/SMAP, EPC1, DMAP1/DNMAP1, RUVBL1/TIP49, RUVBL2, ING3, actin, ACTL6A/BAF53A, MORF4L1/MRG15, MORF4L2/MRGX, MRGBP, YEATS4/GAS41, VPS72/YL1 and MEAF6. The NuA4 complex interacts with MYC and the adenovirus E1A protein. RUVBL2 interacts with EP400. Component of a NuA4-related complex which contains EP400, TRRAP/PAF400, SRCAP, BRD8/SMAP, EPC1, DMAP1/DNMAP1, RUVBL1/TIP49, RUVBL2, actin, ACTL6A/BAF53A, VPS72 and YEATS4/GAS41. Interacts with NPAT. Component of the chromatin-remodeling INO80 complex; specifically part of a complex module associated with the helicase ATP-binding and the helicase C-terminal domain of INO80. Component of some MLL1/MLL complex, at least composed of the core components KMT2A/MLL1, ASH2L, HCFC1/HCF1, WDR5 and RBBP5, as well as the facultative components BACC1, CHD8, E2F6, HSP70, INO80C, KANSL1, LAS1L, MAX, MCRS1, MGA, MYST1/MOF, PELP1, PHF20, PRP31, RING2, RUVB1/TIP49A, RUVB2/TIP49B, SENP3, TAF1, TAF4, TAF6, TAF7, TAF9 and TEX10. Interacts with IGHMBP2. Interacts with TELO2. Interacts with HINT1. Component of a SWR1-like complex. Component of the R2TP complex composed at least of RUVBL1, RUVBL2, RPAP3 and PIHD1. Component of the PAQosome complex which is responsible for the biogenesis of several protein complexes and which consists of R2TP complex members RUVBL1, RUVBL2, RPAP3 and PIH1D1, URI complex members PFDN2, PFDN6, PDRG1, UXT and URI1 as well as ASDURF, POLR2E and DNAAF10/WDR92. Interacts with ITFG1. Interacts with ZMYND10. Interacts with WAC; WAC positively regulates MTOR activity by promoting the assembly of the TTT complex composed of TELO2, TTI1 and TTI2 and the RUVBL complex composed of RUVBL1 and RUVBL2 into the TTT-RUVBL complex which leads to the dimerization of the mTORC1 complex and its subsequent activation. Forms a complex with APPL1 and APPL2. Interacts with ZNHIT2 (via HIT-type zinc finger) in the presence of ATP or ADP; shows a stronger interaction in the presence of ADP. The RUVBL1/RUVBL2 complex interacts with ZNHIT1 (via HIT-type zinc finger), ZNHIT3 (via HIT-type zinc finger), ZNHIT6 (via HIT-type zinc finger) and DDX59/ZNHIT5 (via HIT-type zinc finger) in the presence of ADP. Interacts with NOPCHAP1; the interaction is direct and disrupted upon ATP binding. Interacts with SMG1.

Its subcellular location is the nucleus matrix. The protein resides in the nucleus. It localises to the nucleoplasm. The protein localises to the cytoplasm. It is found in the membrane. Its subcellular location is the dynein axonemal particle. The catalysed reaction is ATP + H2O = ADP + phosphate + H(+). In terms of biological role, possesses single-stranded DNA-stimulated ATPase and ATP-dependent DNA helicase (5' to 3') activity; hexamerization is thought to be critical for ATP hydrolysis and adjacent subunits in the ring-like structure contribute to the ATPase activity. Component of the NuA4 histone acetyltransferase complex which is involved in transcriptional activation of select genes principally by acetylation of nucleosomal histones H4 and H2A. This modification may both alter nucleosome-DNA interactions and promote interaction of the modified histones with other proteins which positively regulate transcription. This complex may be required for the activation of transcriptional programs associated with oncogene and proto-oncogene mediated growth induction, tumor suppressor mediated growth arrest and replicative senescence, apoptosis, and DNA repair. The NuA4 complex ATPase and helicase activities seem to be, at least in part, contributed by the association of RUVBL1 and RUVBL2 with EP400. NuA4 may also play a direct role in DNA repair when recruited to sites of DNA damage. Component of a SWR1-like complex that specifically mediates the removal of histone H2A.Z/H2AZ1 from the nucleosome. Proposed core component of the chromatin remodeling INO80 complex which exhibits DNA- and nucleosome-activated ATPase activity and catalyzes ATP-dependent nucleosome sliding. Plays an essential role in oncogenic transformation by MYC and also modulates transcriptional activation by the LEF1/TCF1-CTNNB1 complex. May also inhibit the transcriptional activity of ATF2. Involved in the endoplasmic reticulum (ER)-associated degradation (ERAD) pathway where it negatively regulates expression of ER stress response genes. May play a role in regulating the composition of the U5 snRNP complex. In Mus musculus (Mouse), this protein is RuvB-like 2 (Ruvbl2).